Consider the following 453-residue polypeptide: tRNA hydroxylation protein P (453 aa).

It belongs to the peptidase U32 family.

Functionally, involved in prephenate-dependent formation of 5-hydroxyuridine (ho5U) modification at position 34 in tRNAs, the first step in 5-carboxymethoxyuridine (cmo5U) biosynthesis. Involved differently in ho5U formation in each tRNA; tRNA(Leu3) and tRNA(Pro3) are major targets of TrhP. This Escherichia coli (strain K12) protein is tRNA hydroxylation protein P.